The following is a 122-amino-acid chain: Small ribosomal subunit protein bS16 (122 aa).

The segment at 85 to 122 is disordered; it reads REAKNNPIKAKPGKRAQERAAEKAQKAADAAAAADAAE. Over residues 99-110 the composition is skewed to basic and acidic residues; it reads RAQERAAEKAQK. A compositionally biased stretch (low complexity) spans 111-122; sequence AADAAAAADAAE.

It belongs to the bacterial ribosomal protein bS16 family.

In Rhizobium etli (strain ATCC 51251 / DSM 11541 / JCM 21823 / NBRC 15573 / CFN 42), this protein is Small ribosomal subunit protein bS16.